Consider the following 463-residue polypeptide: ATP synthase subunit beta (463 aa).

Residue 153-160 (GGAGVGKT) participates in ATP binding.

The protein belongs to the ATPase alpha/beta chains family. In terms of assembly, F-type ATPases have 2 components, CF(1) - the catalytic core - and CF(0) - the membrane proton channel. CF(1) has five subunits: alpha(3), beta(3), gamma(1), delta(1), epsilon(1). CF(0) has three main subunits: a(1), b(2) and c(9-12). The alpha and beta chains form an alternating ring which encloses part of the gamma chain. CF(1) is attached to CF(0) by a central stalk formed by the gamma and epsilon chains, while a peripheral stalk is formed by the delta and b chains.

Its subcellular location is the cell inner membrane. It catalyses the reaction ATP + H2O + 4 H(+)(in) = ADP + phosphate + 5 H(+)(out). Functionally, produces ATP from ADP in the presence of a proton gradient across the membrane. The catalytic sites are hosted primarily by the beta subunits. This Burkholderia cepacia (Pseudomonas cepacia) protein is ATP synthase subunit beta.